The chain runs to 3430 residues: Genome polyprotein (3430 aa).

The interval 2 to 15 is interaction with host EXOC1; that stretch reads SKKPGGPGKNRAVN. Residues 2 to 105 lie on the Cytoplasmic side of the membrane; that stretch reads SKKPGGPGKN…NRRSTKQKKR (104 aa). Positions 37–72 are hydrophobic; homodimerization of capsid protein C; the sequence is LIDGKGPIRFVLALLAFFRFTAIAPTRAVLDRWRGV. Positions 106-123 are cleaved as a propeptide — ER anchor for the capsid protein C, removed in mature form by serine protease NS3; sequence GGTAGFTILLGLIACAGA. Residues 106-126 traverse the membrane as a helical segment; sequence GGTAGFTILLGLIACAGAVTL. Residues 127–248 are Extracellular-facing; that stretch reads SNFQGKVMMT…KATRYLVKTE (122 aa). Residue asparagine 138 is glycosylated (N-linked (GlcNAc...) asparagine; by host). The helical transmembrane segment at 249–269 threads the bilayer; sequence SWILRNPGYALVAAVIGWMLG. Residues 270-275 lie on the Cytoplasmic side of the membrane; that stretch reads SNTMQR. The chain crosses the membrane as a helical span at residues 276 to 290; sequence VVFAILLLLVAPAYS. The Extracellular segment spans residues 291-739; it reads FNCLGMSNRD…QVFGGAFRSL (449 aa). 6 disulfides stabilise this stretch: cysteine 293–cysteine 320, cysteine 350–cysteine 406, cysteine 364–cysteine 395, cysteine 382–cysteine 411, cysteine 476–cysteine 574, and cysteine 591–cysteine 622. Positions 388–401 are fusion peptide; that stretch reads DRGWGNGCGLFGKG. A helical transmembrane segment spans residues 740-760; sequence FGGMSWITQGLLGALLLWMGI. The Cytoplasmic segment spans residues 761 to 766; that stretch reads NARDRS. A helical membrane pass occupies residues 767–787; that stretch reads IAMTFLAVGGVLLFLSVNVHA. Over 788-1212 the chain is Extracellular; it reads DTGCAIDIGR…AFAEANSGGD (425 aa). Disulfide bonds link cysteine 791–cysteine 802 and cysteine 842–cysteine 930. 3 N-linked (GlcNAc...) asparagine; by host glycosylation sites follow: asparagine 917, asparagine 962, and asparagine 994. Intrachain disulfides connect cysteine 966–cysteine 1010, cysteine 1067–cysteine 1116, cysteine 1078–cysteine 1099, and cysteine 1100–cysteine 1103. A helical membrane pass occupies residues 1213–1233; that stretch reads VVHLALMATFKIQPVFLVASF. Residues 1234-1243 are Cytoplasmic-facing; the sequence is LKARWTNQES. Residues 1244-1264 form a helical membrane-spanning segment; sequence ILLMLAAAFFQMAYYDAKNVL. At 1265–1278 the chain is on the lumenal side; sequence SWEVPDVLNSLSVA. A helical membrane pass occupies residues 1279–1299; the sequence is WMILRAISFTNTSNVVVPLLA. The Cytoplasmic portion of the chain corresponds to 1300–1307; that stretch reads LLTPGLKC. Residues 1308-1328 form a helical membrane-spanning segment; sequence LNLDVYRILLLMVGVGSLIKE. Over 1329 to 1340 the chain is Lumenal; sequence KRSSAAKKKGAC. A helical transmembrane segment spans residues 1341–1361; sequence LICLALASTGVFNPMILAAGL. Over 1362-1371 the chain is Cytoplasmic; the sequence is MACDPNRKRG. Residues 1372–1392 traverse the membrane as a helical segment; sequence WPATEVMTAVGLMFAIVGGLA. Topologically, residues 1393 to 1395 are lumenal; it reads ELD. The chain crosses the membrane as a helical span at residues 1396-1416; sequence IDSMAIPMTIAGLMFAAFVIS. At 1417–1473 the chain is on the cytoplasmic side; it reads GKSTDMWIERTADITWESDAEITGSSERVDVRLDDDGNFQLMNDPGAPWKIWMLRMA. The segment at 1424–1463 is interacts with and activates NS3 protease; that stretch reads IERTADITWESDAEITGSSERVDVRLDDDGNFQLMNDPGA. The segment at residues 1474 to 1494 is an intramembrane region (helical); it reads CLAISAYTPWAILPSVIGFWI. Topologically, residues 1495–2170 are cytoplasmic; sequence TLQYTKRGGV…RMALEELPDA (676 aa). The 178-residue stretch at 1502–1679 folds into the Peptidase S7 domain; sequence GGVLWDTPSP…ERMEEPAPAG (178 aa). Catalysis depends on charge relay system; for serine protease NS3 activity residues histidine 1552, aspartate 1576, and serine 1636. The Helicase ATP-binding domain occupies 1682 to 1838; sequence PEMLRKKQIT…ESNAPISDMQ (157 aa). The interval 1686–1689 is important for RNA-binding; sequence RKKQ. 1695–1702 is a binding site for ATP; the sequence is LHPGAGKT. A DEAH box motif is present at residues 1786–1789; it reads DEAH. Residues 1849-2014 form the Helicase C-terminal domain; that stretch reads GYEWITEYVG…GLVAQLYQPE (166 aa). Lysine 1890 carries the N6-acetyllysine; by host modification. The segment at 2165-2169 is regulates the ATPase activity of NS3 helicase; the sequence is EELPD. Residues 2171 to 2191 traverse the membrane as a helical segment; it reads LQTIVLIALLSVMSLGVFFLL. The Lumenal portion of the chain corresponds to 2192-2196; the sequence is MQRKG. The helical intramembrane region spans 2197 to 2217; sequence IGKIGLGGVILGAATFFCWMA. Residue glutamate 2218 is a topological domain, lumenal. Residues 2219–2239 form a helical membrane-spanning segment; it reads VPGTKIAGMLLLSLLLMIVLI. The Cytoplasmic segment spans residues 2240 to 2254; that stretch reads PEPEKQRSQTDNQLA. A helical membrane pass occupies residues 2255–2275; sequence VFLICVLTLVGAVAANEMGWL. Residues 2276–2309 are Lumenal-facing; sequence DKTKNDIGSLLGHRPEARETTLGVESFLLDLRPA. Positions 2310–2330 form an intramembrane region, helical; sequence TAWSLYAVTTAVLTPLLKHLI. At 2331–2377 the chain is on the lumenal side; it reads TSDYINTSLTSINVQASALFTLARGFPFVDVGVSALLLAVGCWGQVT. The chain crosses the membrane as a helical span at residues 2378–2398; sequence LTVTVTAAALLFCHYAYMVPG. The Cytoplasmic portion of the chain corresponds to 2399-2441; that stretch reads WQAEAMRSAQRRTAAGIMKNVVVDGIVATDVPELERTTPVMQK. A helical transmembrane segment spans residues 2442–2462; it reads KVGQIILILVSMAAVVVNPSV. The Lumenal portion of the chain corresponds to 2463–2467; it reads RTVRE. The helical transmembrane segment at 2468 to 2488 threads the bilayer; that stretch reads AGILTTAAAVTLWENGASSVW. Over 2489-3430 the chain is Cytoplasmic; that stretch reads NATTAIGLCH…DTIVVEDTVL (942 aa). The mRNA cap 0-1 NS5-type MT domain maps to 2526 to 2791; it reads GGAKGRTLGE…DVNLGSGTRA (266 aa). Residue serine 2581 coordinates S-adenosyl-L-methionine. Serine 2581 is modified (phosphoserine). Residue lysine 2586 is the For 2'-O-MTase activity of the active site. S-adenosyl-L-methionine-binding residues include glycine 2611, tryptophan 2612, threonine 2629, lysine 2630, aspartate 2656, and valine 2657. Aspartate 2671 serves as the catalytic For 2'-O-MTase activity. Residue isoleucine 2672 coordinates S-adenosyl-L-methionine. Catalysis depends on for 2'-O-MTase activity residues lysine 2707 and glutamate 2743. S-adenosyl-L-methionine is bound at residue tyrosine 2745. A Nuclear localization signal motif is present at residues 2914–2916; sequence RDK. The Zn(2+) site is built by glutamate 2965, histidine 2969, cysteine 2974, and cysteine 2977. The 153-residue stretch at 3055–3207 folds into the RdRp catalytic domain; the sequence is GKVYADDTAG…KPLDDRFATS (153 aa). Zn(2+) contacts are provided by histidine 3242, cysteine 3258, and cysteine 3377. A PDZ-binding motif is present at residues 3428 to 3430; that stretch reads TVL.

In the N-terminal section; belongs to the class I-like SAM-binding methyltransferase superfamily. mRNA cap 0-1 NS5-type methyltransferase family. In terms of assembly, homodimer. Interacts (via N-terminus) with host EXOC1 (via C-terminus); this interaction results in EXOC1 degradation through the proteasome degradation pathway. Interacts with host DDX56; this interaction plays an important role in genomic RNA encapsidation. As to quaternary structure, forms heterodimers with envelope protein E in the endoplasmic reticulum and Golgi. Homodimer; in the endoplasmic reticulum and Golgi. In terms of assembly, homodimer; Homohexamer when secreted. Interacts with envelope protein E. NS1 interacts with NS4B. Interacts with host complement protein CFH; this interaction leads to the degradation of C3. As to quaternary structure, interacts (via N-terminus) with serine protease NS3. Forms a heterodimer with serine protease NS3. May form homooligomers. In terms of assembly, forms a heterodimer with NS2B. Interacts with NS4B. Interacts with unphosphorylated RNA-directed RNA polymerase NS5; this interaction stimulates RNA-directed RNA polymerase NS5 guanylyltransferase activity. As to quaternary structure, interacts with Serine protease/Helicase NS3. Interacts with NS1. Homodimer. Interacts with host STAT2; this interaction inhibits the phosphorylation of the latter, and, when all viral proteins are present (polyprotein), targets STAT2 for degradation. Interacts with host PAF1 complex. In terms of processing, specific enzymatic cleavages in vivo yield mature proteins. Cleavages in the lumen of endoplasmic reticulum are performed by host signal peptidase, whereas cleavages in the cytoplasmic side are performed by serine protease NS3. Signal cleavage at the 2K-4B site requires a prior NS3 protease-mediated cleavage at the 4A-2K site. Cleaved in post-Golgi vesicles by a host furin, releasing the mature small envelope protein M, and peptide pr. This cleavage is incomplete as up to 30% of viral particles still carry uncleaved prM. Post-translationally, not N-glycosylated. In terms of processing, N-glycosylated. The excreted form is glycosylated and this is required for efficient secretion of the protein from infected cells. Acetylated by host KAT5. Acetylation modulates NS3 RNA-binding and unwinding activities and plays an important positive role for viral replication. Post-translationally, phosphorylated on serines residues. This phosphorylation may trigger NS5 nuclear localization.

The protein localises to the virion. The protein resides in the host nucleus. It is found in the host cytoplasm. It localises to the host perinuclear region. Its subcellular location is the secreted. The protein localises to the virion membrane. The protein resides in the host endoplasmic reticulum membrane. The catalysed reaction is Selective hydrolysis of -Xaa-Xaa-|-Yaa- bonds in which each of the Xaa can be either Arg or Lys and Yaa can be either Ser or Ala.. The enzyme catalyses RNA(n) + a ribonucleoside 5'-triphosphate = RNA(n+1) + diphosphate. It carries out the reaction a ribonucleoside 5'-triphosphate + H2O = a ribonucleoside 5'-diphosphate + phosphate + H(+). It catalyses the reaction ATP + H2O = ADP + phosphate + H(+). The catalysed reaction is a 5'-end (5'-triphosphoguanosine)-ribonucleoside in mRNA + S-adenosyl-L-methionine = a 5'-end (N(7)-methyl 5'-triphosphoguanosine)-ribonucleoside in mRNA + S-adenosyl-L-homocysteine. The enzyme catalyses a 5'-end (N(7)-methyl 5'-triphosphoguanosine)-ribonucleoside in mRNA + S-adenosyl-L-methionine = a 5'-end (N(7)-methyl 5'-triphosphoguanosine)-(2'-O-methyl-ribonucleoside) in mRNA + S-adenosyl-L-homocysteine + H(+). Plays a role in virus budding by binding to the cell membrane and gathering the viral RNA into a nucleocapsid that forms the core of a mature virus particle. During virus entry, may induce genome penetration into the host cytoplasm after hemifusion induced by the surface proteins. Can migrate to the cell nucleus where it modulates host functions. Overcomes the anti-viral effects of host EXOC1 by sequestering and degrading the latter through the proteasome degradation pathway. In terms of biological role, inhibits RNA silencing by interfering with host Dicer. Its function is as follows. Prevents premature fusion activity of envelope proteins in trans-Golgi by binding to envelope protein E at pH6.0. After virion release in extracellular space, gets dissociated from E dimers. Functionally, acts as a chaperone for envelope protein E during intracellular virion assembly by masking and inactivating envelope protein E fusion peptide. prM is the only viral peptide matured by host furin in the trans-Golgi network probably to avoid catastrophic activation of the viral fusion activity in acidic Golgi compartment prior to virion release. prM-E cleavage is inefficient, and many virions are only partially matured. These uncleaved prM would play a role in immune evasion. May play a role in virus budding. Exerts cytotoxic effects by activating a mitochondrial apoptotic pathway through M ectodomain. May display a viroporin activity. In terms of biological role, binds to host cell surface receptor and mediates fusion between viral and cellular membranes. Envelope protein is synthesized in the endoplasmic reticulum in the form of heterodimer with protein prM. They play a role in virion budding in the ER, and the newly formed immature particle is covered with 60 spikes composed of heterodimer between precursor prM and envelope protein E. The virion is transported to the Golgi apparatus where the low pH causes dissociation of PrM-E heterodimers and formation of E homodimers. prM-E cleavage is inefficient, and many virions are only partially matured. These uncleaved prM would play a role in immune evasion. Its function is as follows. Involved in immune evasion, pathogenesis and viral replication. Once cleaved off the polyprotein, is targeted to three destinations: the viral replication cycle, the plasma membrane and the extracellular compartment. Essential for viral replication. Required for formation of the replication complex and recruitment of other non-structural proteins to the ER-derived membrane structures. Excreted as a hexameric lipoparticle that plays a role against host immune response. Antagonizing the complement function. Binds to the host macrophages and dendritic cells. Inhibits signal transduction originating from Toll-like receptor 3 (TLR3). Functionally, component of the viral RNA replication complex that functions in virion assembly and antagonizes the host alpha/beta interferon antiviral response. Required cofactor for the serine protease function of NS3. May have membrane-destabilizing activity and form viroporins. In terms of biological role, displays three enzymatic activities: serine protease, NTPase and RNA helicase. NS3 serine protease, in association with NS2B, performs its autocleavage and cleaves the polyprotein at dibasic sites in the cytoplasm: C-prM, NS2A-NS2B, NS2B-NS3, NS3-NS4A, NS4A-2K and NS4B-NS5. NS3 RNA helicase binds RNA and unwinds dsRNA in the 3' to 5' direction. NS3 supports the separation of RNA daughter and template strands during viral replication. The helicase part is involved in the inhibition of phosphorylation of host STAT1, and thereby inhibition of host type-I IFN signaling. In addition, NS3 assists the initiation of replication by unwinding the RNA secondary structure in the 3' non-translated region (NTR). Inhibits STAT2 translocation in the nucleus after IFN-alpha treatment. Its function is as follows. Regulates the ATPase activity of the NS3 helicase activity. NS4A allows NS3 helicase to conserve energy during unwinding. Functionally, functions as a signal peptide for NS4B and is required for the interferon antagonism activity of the latter. Induces the formation of ER-derived membrane vesicles where the viral replication takes place. Inhibits interferon (IFN)-induced host STAT1 phosphorylation and nuclear translocation, thereby preventing the establishment of cellular antiviral state by blocking the IFN-alpha/beta pathway. Inhibits STAT2 translocation in the nucleus after IFN-alpha treatment. In terms of biological role, replicates the viral (+) and (-) RNA genome, and performs the capping of genomes in the cytoplasm. NS5 methylates viral RNA cap at guanine N-7 and ribose 2'-O positions. Besides its role in RNA genome replication, also prevents the establishment of cellular antiviral state by blocking the interferon-alpha/beta (IFN-alpha/beta) signaling pathway. Inhibits host TYK2 and STAT2 phosphorylation, thereby preventing activation of JAK-STAT signaling pathway. This Aedes (Tropical bont tick) protein is Genome polyprotein.